The primary structure comprises 383 residues: Succinate--CoA ligase [ADP-forming] subunit beta (383 aa).

One can recognise an ATP-grasp domain in the interval 9–241 (KEVLHKFNVS…YDEEVKEEIE (233 aa)). ATP is bound by residues Lys-46, 53-55 (GRG), Glu-99, Ser-102, and Glu-107. Mg(2+)-binding residues include Asn-196 and Asp-210. Substrate contacts are provided by residues Asn-261 and 318–320 (GIM).

This sequence belongs to the succinate/malate CoA ligase beta subunit family. As to quaternary structure, heterotetramer of two alpha and two beta subunits. It depends on Mg(2+) as a cofactor.

The catalysed reaction is succinate + ATP + CoA = succinyl-CoA + ADP + phosphate. It carries out the reaction GTP + succinate + CoA = succinyl-CoA + GDP + phosphate. It participates in carbohydrate metabolism; tricarboxylic acid cycle; succinate from succinyl-CoA (ligase route): step 1/1. Succinyl-CoA synthetase functions in the citric acid cycle (TCA), coupling the hydrolysis of succinyl-CoA to the synthesis of either ATP or GTP and thus represents the only step of substrate-level phosphorylation in the TCA. The beta subunit provides nucleotide specificity of the enzyme and binds the substrate succinate, while the binding sites for coenzyme A and phosphate are found in the alpha subunit. The sequence is that of Succinate--CoA ligase [ADP-forming] subunit beta from Wolbachia sp. subsp. Drosophila simulans (strain wRi).